A 225-amino-acid polypeptide reads, in one-letter code: MKKKLSIAIDGPAAAGKSTVAKIVAAKKSYIYIDTGAMYRAITLAALQHGVDLEDEQALDALLKKTVIELVSTGEGQKVHLDNTDVTEEIRTDRVSNQVSVVAKHRAVREEMVRRQQELGKKGGVVMDGRDIGTHVLPDAEVKIFLLASVEERAKRRFEENQKKGYDVNYDQLIEEIARRDKLDSEREVSPLKKADDAIEIDTTSLSIQEVAGKILDAADRVEKQ.

11 to 19 (GPAAAGKST) contributes to the ATP binding site.

The protein belongs to the cytidylate kinase family. Type 1 subfamily.

It localises to the cytoplasm. It catalyses the reaction CMP + ATP = CDP + ADP. The enzyme catalyses dCMP + ATP = dCDP + ADP. The chain is Cytidylate kinase from Bacillus pumilus (strain SAFR-032).